Here is a 150-residue protein sequence, read N- to C-terminus: Large ribosomal subunit protein bL9 (150 aa).

The protein belongs to the bacterial ribosomal protein bL9 family.

In terms of biological role, binds to the 23S rRNA. The sequence is that of Large ribosomal subunit protein bL9 from Clavibacter sepedonicus (Clavibacter michiganensis subsp. sepedonicus).